Here is a 264-residue protein sequence, read N- to C-terminus: 3'-5' ssDNA/RNA exonuclease TatD (264 aa).

A divalent metal cation-binding residues include Glu92, His128, and His153.

The protein belongs to the metallo-dependent hydrolases superfamily. TatD-type hydrolase family. TatD subfamily. As to quaternary structure, monomer. Requires Mg(2+) as cofactor.

It localises to the cytoplasm. In terms of biological role, 3'-5' exonuclease that prefers single-stranded DNA and RNA. May play a role in the H(2)O(2)-induced DNA damage repair. The protein is 3'-5' ssDNA/RNA exonuclease TatD of Musicola paradisiaca (strain Ech703) (Dickeya paradisiaca).